The chain runs to 423 residues: UPF0229 protein PSPA7_0730 (423 aa).

Residues 84 to 107 (AGEHIARPSGGGGGRGGGKASNSG) are disordered. Positions 92-102 (SGGGGGRGGGK) are enriched in gly residues.

Belongs to the UPF0229 family.

In Pseudomonas paraeruginosa (strain DSM 24068 / PA7) (Pseudomonas aeruginosa (strain PA7)), this protein is UPF0229 protein PSPA7_0730.